Reading from the N-terminus, the 512-residue chain is mRNA export factor (512 aa).

Residues 1–242 (MATDIDMLID…PVPERKAPSA (242 aa)) are disordered. A Nuclear export signal motif is present at residues 5-17 (IDMLIDLGLDLSD). A phosphoserine; by host mark is found at serine 16 and serine 18. Acidic residues-rich tracts occupy residues 16 to 28 (SDSELEEDALERD) and 36 to 55 (PESDSSGECSSSDEDMEDPC). Residues 104 to 112 (VWSRLGTRR) are interaction with host ALYREF. The Nuclear localization signal signature appears at 110–138 (TRRSASPREPHGGKVARIQPPSTKAPHPR). Serine 113 is modified (phosphoserine; by host). The span at 135 to 149 (PHPRGGRRGRRRGRG) shows a compositional bias: basic residues. The residue at position 138 (arginine 138) is a Dimethylated arginine; by host. An RGG-box region spans residues 138–152 (RGGRRGRRRGRGRYG). The residue at position 148 (arginine 148) is an Omega-N-methylarginine; by host. Arginine 150 bears the Dimethylated arginine; by host mark. The segment covering 228–240 (ADGRAPVPERKAP) has biased composition (basic and acidic residues). 4 residues coordinate Zn(2+): cysteine 400, histidine 479, cysteine 483, and cysteine 488. The CHC2-type zinc finger occupies 400 to 488 (CYLKARGLCG…HRQECSSRVC (89 aa)).

The protein belongs to the HHV-1 ICP27 protein family. In terms of assembly, interacts with host RBP1; this interaction facilitates the RNA polymerase recruitment to viral transcription sites. Interacts (via the RGG box) with host ALYREF/THOC4; this interaction recruits ALYREF to viral replication compartments and probably directs viral mRNA to the TAP/NFX1 pathway. Interacts (via the RGG box) with host SRPK1; this interaction relocalizes SRPK1 to the nucleus and seems to alter its activity. Interacts with ICP4; this interaction modulates ICP4 DNA-binding activity. Interacts with host NXF1; this interaction allows efficient export of HSV-1 early and late transcripts. Interacts with host IRF3; this interaction inhibits IRF3 phosphorylation and nuclear translocation. Methylated within the RGG box possibly by host PRMT1. When hypomethylated, ICP27 is exported to the cytoplasm earlier and more rapidly. Post-translationally, phosphorylated.

Its subcellular location is the host cytoplasm. The protein resides in the host nucleus. Its function is as follows. Multifunctional regulator of the expression of viral genes that contributes to the shutoff of host protein synthesis and mediates nuclear export of viral intronless mRNAs. Also stimulates translation of viral transcripts. Independently, plays a role in the regulation of virion release. Also plays a role in the inhibition of host innate immune response by targeting host IRF3 and thereby preventing production of beta-interferon. Silences the 3' splice site of the host promyelocytic leukemia (PML) intron 7a, thereby switching PML isoforms from PML-II to PML-V. This could be linked to the accelerated mRNA export induced by ICP27 which might not provide sufficient time for PML pre-mRNA to be spliced in the nucleus. Also suppresses splicing of the viral ICP34.5 mRNA, allowing the virus to express a variant form of ICP34.5. The protein is mRNA export factor of Human herpesvirus 2 (strain HG52) (HHV-2).